The chain runs to 433 residues: ATP-dependent protease ATPase subunit HslU (433 aa).

ATP-binding positions include valine 18, 60 to 65, aspartate 246, glutamate 311, and arginine 383; that span reads GVGKTE.

It belongs to the ClpX chaperone family. HslU subfamily. In terms of assembly, a double ring-shaped homohexamer of HslV is capped on each side by a ring-shaped HslU homohexamer. The assembly of the HslU/HslV complex is dependent on binding of ATP.

It localises to the cytoplasm. ATPase subunit of a proteasome-like degradation complex; this subunit has chaperone activity. The binding of ATP and its subsequent hydrolysis by HslU are essential for unfolding of protein substrates subsequently hydrolyzed by HslV. HslU recognizes the N-terminal part of its protein substrates and unfolds these before they are guided to HslV for hydrolysis. The polypeptide is ATP-dependent protease ATPase subunit HslU (Nitrobacter winogradskyi (strain ATCC 25391 / DSM 10237 / CIP 104748 / NCIMB 11846 / Nb-255)).